The primary structure comprises 1225 residues: Cytosolic carboxypeptidase 1 (1225 aa).

Acidic residues predominate over residues Asp366 to Asp392. Residues Asp366–Asp398 form a disordered region. One can recognise a Peptidase M14 domain in the interval Tyr842–Lys1132. His914, Glu917, and His1011 together coordinate Zn(2+). The active-site Proton donor/acceptor is Glu1096. A compositionally biased stretch (acidic residues) spans Tyr1181–Leu1193. The interval Tyr1181–Thr1225 is disordered.

It belongs to the peptidase M14 family. It depends on Zn(2+) as a cofactor.

Its subcellular location is the cytoplasm. It localises to the cytosol. It is found in the nucleus. The protein resides in the mitochondrion. It catalyses the reaction (L-glutamyl)(n+1)-gamma-L-glutamyl-L-glutamyl-[protein] + H2O = (L-glutamyl)(n)-gamma-L-glutamyl-L-glutamyl-[protein] + L-glutamate. It carries out the reaction C-terminal L-alpha-aminoacyl-L-glutamyl-L-glutamyl-[tubulin] + H2O = C-terminal L-alpha-aminoacyl-L-glutamyl-[tubulin] + L-glutamate. In terms of biological role, metallocarboxypeptidase that mediates protein deglutamylation of tubulin and non-tubulin target proteins. Catalyzes the removal of polyglutamate side chains present on the gamma-carboxyl group of glutamate residues within the C-terminal tail of alpha- and beta-tubulin. Specifically cleaves tubulin long-side-chains, while it is not able to remove the branching point glutamate. Also catalyzes the removal of polyglutamate residues from the carboxy-terminus of alpha-tubulin as well as non-tubulin proteins. This Xenopus laevis (African clawed frog) protein is Cytosolic carboxypeptidase 1 (agtpbp1).